The chain runs to 313 residues: Caffeic acid 3-O-methyltransferase (313 aa).

112–118 (IDQDRVF) is a binding site for substrate. Residues 144-162 (AFDYPGTDPRFNKIFNRAM) are substrate binding. 5 residues coordinate S-adenosyl-L-methionine: glycine 190, aspartate 213, aspartate 233, methionine 234, and lysine 247. Histidine 251 acts as the Proton acceptor in catalysis.

This sequence belongs to the class I-like SAM-binding methyltransferase superfamily. Cation-independent O-methyltransferase family. COMT subfamily. In terms of assembly, homodimer.

It carries out the reaction (E)-caffeate + S-adenosyl-L-methionine = (E)-ferulate + S-adenosyl-L-homocysteine + H(+). The protein operates within aromatic compound metabolism; phenylpropanoid biosynthesis. Catalyzes the conversion of caffeic acid to ferulic acid and of 5-hydroxyferulic acid to sinapic acid. The resulting products may subsequently be converted to the corresponding alcohols that are incorporated into lignins. This chain is Caffeic acid 3-O-methyltransferase (COMT1), found in Eucalyptus globulus (Tasmanian blue gum).